The sequence spans 300 residues: MNQSYGRLVSRAAIAATAMASLLLLIKIFAWWYTGSVSILAALVDSLVDIGASLTNLLVVRYSLQPADDNHSFGHGKAESLAALAQSMFISGSALFLFLTGIQHLVSPTPMTDPGVGVIVTIVALICTIILVSFQRWVVRRTQSQAVRADMLHYQSDVMMNGAILLALGLSWYGWHRADALFALGIGIYILYSALRMGYEAVQSLLDRALPDEERQEIIGIVTSWPGVSGAHDLRTRQSGPTRFIQIHLEMEDSLPLVQAHMVADQVEQAILRRFPGSDVIIHQDPCSVVPREGKRSMLS.

Transmembrane regions (helical) follow at residues 12 to 32 (AAIA…FAWW), 39 to 59 (ILAA…NLLV), 82 to 102 (AALA…LTGI), and 114 to 134 (PGVG…LVSF). Positions 45 and 49 each coordinate Zn(2+). Residues H153 and D157 each contribute to the Zn(2+) site. 2 helical membrane-spanning segments follow: residues 156-176 (SDVM…YGWH) and 178-198 (ADAL…LRMG).

Belongs to the cation diffusion facilitator (CDF) transporter (TC 2.A.4) family. FieF subfamily. In terms of assembly, homodimer.

Its subcellular location is the cell inner membrane. The enzyme catalyses Zn(2+)(in) + H(+)(out) = Zn(2+)(out) + H(+)(in). It catalyses the reaction Cd(2+)(in) + H(+)(out) = Cd(2+)(out) + H(+)(in). It carries out the reaction Fe(2+)(in) + H(+)(out) = Fe(2+)(out) + H(+)(in). Its function is as follows. Divalent metal cation transporter which exports Zn(2+), Cd(2+) and possibly Fe(2+). May be involved in zinc and iron detoxification by efflux. The sequence is that of Cation-efflux pump FieF from Shigella flexneri serotype 5b (strain 8401).